The chain runs to 617 residues: Dihydroxy-acid dehydratase (617 aa).

D81 contributes to the Mg(2+) binding site. Residue C122 coordinates [2Fe-2S] cluster. D123 and K124 together coordinate Mg(2+). At K124 the chain carries N6-carboxylysine. Residue C195 coordinates [2Fe-2S] cluster. E491 contacts Mg(2+). The active-site Proton acceptor is the S517.

The protein belongs to the IlvD/Edd family. In terms of assembly, homodimer. It depends on [2Fe-2S] cluster as a cofactor. Mg(2+) is required as a cofactor.

It carries out the reaction (2R)-2,3-dihydroxy-3-methylbutanoate = 3-methyl-2-oxobutanoate + H2O. The enzyme catalyses (2R,3R)-2,3-dihydroxy-3-methylpentanoate = (S)-3-methyl-2-oxopentanoate + H2O. It functions in the pathway amino-acid biosynthesis; L-isoleucine biosynthesis; L-isoleucine from 2-oxobutanoate: step 3/4. The protein operates within amino-acid biosynthesis; L-valine biosynthesis; L-valine from pyruvate: step 3/4. In terms of biological role, functions in the biosynthesis of branched-chain amino acids. Catalyzes the dehydration of (2R,3R)-2,3-dihydroxy-3-methylpentanoate (2,3-dihydroxy-3-methylvalerate) into 2-oxo-3-methylpentanoate (2-oxo-3-methylvalerate) and of (2R)-2,3-dihydroxy-3-methylbutanoate (2,3-dihydroxyisovalerate) into 2-oxo-3-methylbutanoate (2-oxoisovalerate), the penultimate precursor to L-isoleucine and L-valine, respectively. The polypeptide is Dihydroxy-acid dehydratase (Buchnera aphidicola subsp. Acyrthosiphon pisum (strain 5A)).